We begin with the raw amino-acid sequence, 122 residues long: Large ribosomal subunit protein uL14 (122 aa).

This sequence belongs to the universal ribosomal protein uL14 family. Part of the 50S ribosomal subunit. Forms a cluster with proteins L3 and L19. In the 70S ribosome, L14 and L19 interact and together make contacts with the 16S rRNA in bridges B5 and B8.

Binds to 23S rRNA. Forms part of two intersubunit bridges in the 70S ribosome. This Erythrobacter litoralis (strain HTCC2594) protein is Large ribosomal subunit protein uL14.